Here is a 320-residue protein sequence, read N- to C-terminus: Nodulation efficiency protein NfeD (320 aa).

The protein belongs to the ornithine cyclodeaminase/mu-crystallin family.

Functionally, seems to be involved in the nodulation efficiency of R.meliloti GR4 on alfalfa roots. This is Nodulation efficiency protein NfeD from Rhizobium meliloti (Ensifer meliloti).